A 232-amino-acid polypeptide reads, in one-letter code: MTFQAHVVTLYPEMFPGVLGHSLAGRALERGIWSLNTVQIRDFALDKHHSVDDTPAGGGAGMVMRADVLVAAIDHCPPDLPRILLSPRGRPFNQAHARSLASDRGVVLVCGRFEGVDERVLQARKLEEISIGDYILSGGETAALVLLDALVRLLPGVMGNQASGECESFENGLLEHPHYTRPPVFEGLEIPLVLTSGHHKAIADWRQEQAEMLTQKRRPDLYAIYNKNRRKT.

S-adenosyl-L-methionine contacts are provided by residues Gly111 and 131–136 (IGDYIL).

The protein belongs to the RNA methyltransferase TrmD family. As to quaternary structure, homodimer.

It localises to the cytoplasm. It carries out the reaction guanosine(37) in tRNA + S-adenosyl-L-methionine = N(1)-methylguanosine(37) in tRNA + S-adenosyl-L-homocysteine + H(+). In terms of biological role, specifically methylates guanosine-37 in various tRNAs. This Bartonella bacilliformis (strain ATCC 35685 / KC583 / Herrer 020/F12,63) protein is tRNA (guanine-N(1)-)-methyltransferase.